The sequence spans 540 residues: Raucaffricine-O-beta-D-glucosidase (540 aa).

A beta-D-glucoside contacts are provided by residues Gln-36, His-140, and 185-186; that span reads NE. Glu-186 serves as the catalytic Proton donor. Cys-221 and Cys-230 are joined by a disulfide. A beta-D-glucoside-binding positions include Tyr-347, Glu-420, Trp-469, 476–477, and Phe-485; that span reads EW. The Nucleophile role is filled by Glu-420.

This sequence belongs to the glycosyl hydrolase 1 family.

It catalyses the reaction raucaffricine + H2O = vomilenine + D-glucose. The enzyme catalyses vomilenine + UDP-alpha-D-glucose = raucaffricine + UDP + H(+). Functionally, glucosidase specifically involved in alkaloid biosynthesis leading to the accumulation of several alkaloids, including ajmaline, an important plant-derived pharmaceutical used in the treatment of heart disorders. The chain is Raucaffricine-O-beta-D-glucosidase from Rauvolfia serpentina (Serpentine wood).